The sequence spans 671 residues: Bifunctional acetylxylan esterase/xylanase XynS20E (671 aa).

Residues 1–19 (MRLGVALSTIAVLLTATSA) form the signal peptide. The tract at residues 54 to 279 (QGAGRDIHVY…IQDIWDFVSQ (226 aa)) is acetylxylan esterase. Ser152 (charge relay system) is an active-site residue. The N-linked (GlcNAc...) asparagine glycan is linked to Asn238. The segment at 285–328 (PVSASGNGGGNTTPTNPSTGGNGNGNGGGNTTPTNPSTGGNGNG) is disordered. Gly residues predominate over residues 304–314 (GGNGNGNGGGN). 2 CBM10 domains span residues 335–374 (KCSSNITKQGYKCCASNCEVVYTDSDGDWGVENDQWCGCG) and 383–422 (TCSAKILQQGYKCCPSGCIIYYTDEDGTWGVNGEEWCGCG). Residue Asn339 is glycosylated (N-linked (GlcNAc...) asparagine). Residues Asn445 and Asn483 are each glycosylated (N-linked (GlcNAc...) asparagine). Residues 461 to 661 (TVTSNKVGDI…NNGGTSGTAD (201 aa)) enclose the GH11 domain. The active-site Nucleophile is Glu555. Glu648 functions as the Proton donor in the catalytic mechanism.

The protein in the N-terminal section; belongs to the axeA family. In the C-terminal section; belongs to the glycosyl hydrolase 11 (cellulase G) family.

The protein resides in the secreted. The enzyme catalyses Deacetylation of xylans and xylo-oligosaccharides.. It catalyses the reaction Endohydrolysis of (1-&gt;4)-beta-D-xylosidic linkages in xylans.. It participates in glycan degradation; xylan degradation. Functionally, bifunctional acetylxylan esterase/xylanase involved in the hydrolysis of xylan, a major structural heterogeneous polysaccharide found in plant biomass representing the second most abundant polysaccharide in the biosphere, after cellulose. Degrades xylan from acetylxylan, beechwood, birchwood, and oat spelt, and releases acetate from 4-methylumbelliferyl acetate and beta-D-xylose tetraacetate. No activity is observed against carboxy methyl cellulose, beta-glucan, p-nitrophenol acetate, p-nitrophenol laurate, p-nitrophenol myristate, p-nitrophenol, palmitate, or beta-naphthol acetate. The polypeptide is Bifunctional acetylxylan esterase/xylanase XynS20E (xynS20E) (Neocallimastix patriciarum (Rumen fungus)).